The chain runs to 95 residues: Putative protein RDUR (95 aa).

The segment covering M1–S12 has biased composition (basic and acidic residues). The tract at residues M1–C20 is disordered.

In terms of biological role, could play a role in innate immunity against viruses. The polypeptide is Putative protein RDUR (Homo sapiens (Human)).